The primary structure comprises 186 residues: Threonylcarbamoyl-AMP synthase (186 aa).

Residues 2 to 186 (PNEFELAVAA…ARTGAIIRPS (185 aa)) enclose the YrdC-like domain.

It belongs to the SUA5 family. TsaC subfamily.

The protein localises to the cytoplasm. It catalyses the reaction L-threonine + hydrogencarbonate + ATP = L-threonylcarbamoyladenylate + diphosphate + H2O. Its function is as follows. Required for the formation of a threonylcarbamoyl group on adenosine at position 37 (t(6)A37) in tRNAs that read codons beginning with adenine. Catalyzes the conversion of L-threonine, HCO(3)(-)/CO(2) and ATP to give threonylcarbamoyl-AMP (TC-AMP) as the acyladenylate intermediate, with the release of diphosphate. This is Threonylcarbamoyl-AMP synthase from Aeromonas hydrophila subsp. hydrophila (strain ATCC 7966 / DSM 30187 / BCRC 13018 / CCUG 14551 / JCM 1027 / KCTC 2358 / NCIMB 9240 / NCTC 8049).